A 176-amino-acid chain; its full sequence is MTTIVSVRRNGQVVIGGDGQATLGNTVMKGNVRKVRRLYHDRVIAGFAGGTADAFTLFELFERKLELHQGHLVKAAVELAKDWRTDRMLRKLEALLAVADENASLIITGNGDVVQPENDLIAIGSGGPYAQAAARALLENTELGARDIVEKSLGIAGDICIYTNQFHTIEELASKA.

Residue Thr2 is part of the active site. 3 residues coordinate Na(+): Gly157, Cys160, and Thr163.

This sequence belongs to the peptidase T1B family. HslV subfamily. As to quaternary structure, a double ring-shaped homohexamer of HslV is capped on each side by a ring-shaped HslU homohexamer. The assembly of the HslU/HslV complex is dependent on binding of ATP.

It localises to the cytoplasm. The enzyme catalyses ATP-dependent cleavage of peptide bonds with broad specificity.. With respect to regulation, allosterically activated by HslU binding. Functionally, protease subunit of a proteasome-like degradation complex believed to be a general protein degrading machinery. This chain is ATP-dependent protease subunit HslV, found in Pectobacterium carotovorum subsp. carotovorum (strain PC1).